The chain runs to 89 residues: UPF0335 protein Caul_0876 (89 aa).

Belongs to the UPF0335 family.

This chain is UPF0335 protein Caul_0876, found in Caulobacter sp. (strain K31).